A 647-amino-acid chain; its full sequence is Microtubule-associated protein 9 (647 aa).

Serine 2 bears the N-acetylserine mark. The residue at position 12 (tyrosine 12) is a Phosphotyrosine. Disordered stretches follow at residues 127–323, 344–421, 491–514, 530–553, 580–600, and 613–647; these read KSFS…ELIM, SATA…PDRA, KRLEEKNKKKTEEENAARKGEALQ, KNRKEREYERAKKQKEEETVAEKK, NEKRKEELKRAEKKDKDKQAI, and QERIERKQKKRHSFLESEALPPWSPPSRTVFAKVF. Basic and acidic residues predominate over residues 133-145; the sequence is QNKDEEFEKDKIK. Over residues 155 to 166 the composition is skewed to polar residues; that stretch reads IKSTSSAENNSL. The span at 174–186 shows a compositional bias: basic residues; that stretch reads PSPRPRSMLKKKS. Residues 184–210 adopt a coiled-coil conformation; it reads KKSHMEEKDGLEDKETALSEELELHSA. The segment covering 187–200 has biased composition (basic and acidic residues); the sequence is HMEEKDGLEDKETA. Composition is skewed to polar residues over residues 210-219 and 239-249; these read APSSLPTPNG and CLTSLASSSLK. Over residues 268 to 287 the composition is skewed to basic and acidic residues; the sequence is DPNEEITENHNSLKSDENKE. Residues 298-328 adopt a coiled-coil conformation; that stretch reads AVEKSKESQVTADDLEEEKAKAELIMDDDRT. Residues 365–374 are compositionally biased toward low complexity; that stretch reads NNRASSASAR. Residues 443-628 adopt a coiled-coil conformation; sequence MHRIKRIESE…KQKKRHSFLE (186 aa).

In terms of assembly, binds to purified microtubules via its C-terminus.

Its subcellular location is the cytoplasm. The protein resides in the cytoskeleton. It localises to the spindle. Functionally, involved in organization of the bipolar mitotic spindle. Required for bipolar spindle assembly, mitosis progression and cytokinesis. May act by stabilizing interphase microtubules. In Homo sapiens (Human), this protein is Microtubule-associated protein 9 (MAP9).